Here is a 226-residue protein sequence, read N- to C-terminus: tRNA (guanine-N(1)-)-methyltransferase (226 aa).

S-adenosyl-L-methionine-binding positions include G110 and 129 to 134 (IGDYIL).

The protein belongs to the RNA methyltransferase TrmD family. Homodimer.

It localises to the cytoplasm. The enzyme catalyses guanosine(37) in tRNA + S-adenosyl-L-methionine = N(1)-methylguanosine(37) in tRNA + S-adenosyl-L-homocysteine + H(+). Its function is as follows. Specifically methylates guanosine-37 in various tRNAs. In Malacoplasma penetrans (strain HF-2) (Mycoplasma penetrans), this protein is tRNA (guanine-N(1)-)-methyltransferase.